The primary structure comprises 298 residues: Nucleotide-binding protein GTNG_3015 (298 aa).

An ATP-binding site is contributed by 17–24 (GMSGAGKT). Residue 68–71 (DLRS) coordinates GTP.

The protein belongs to the RapZ-like family.

Displays ATPase and GTPase activities. This Geobacillus thermodenitrificans (strain NG80-2) protein is Nucleotide-binding protein GTNG_3015.